An 811-amino-acid polypeptide reads, in one-letter code: Potassium transporter 27 (811 aa).

The Cytoplasmic segment spans residues 1-64 (MGDDVLGRGS…QEESWARTLK (64 aa)). A helical membrane pass occupies residues 65 to 85 (LAFQCVGILYGDIGTSPLFVY). Residues 86-102 (SSTFKDGVRHPDDLLGA) are Extracellular-facing. The chain crosses the membrane as a helical span at residues 103-123 (LSLIIYSFALFTIVKYVFIAL). At 124–188 (RANDDGDGGT…ELLETNRAVK (65 aa)) the chain is on the cytoplasmic side. The helical transmembrane segment at 189-209 (IWLFLLTILATAMVISDAVLT) threads the bilayer. At 210–226 (PAISVLSAVGGLKEKAP) the chain is on the extracellular side. Residues 227–247 (NLTTDEIVWITVATLVVLFAI) form a helical membrane-spanning segment. The Cytoplasmic portion of the chain corresponds to 248 to 254 (QRFGTDK). Residues 255 to 275 (IGYLFAPIILLWLLLIGCVGI) traverse the membrane as a helical segment. Residues 276 to 310 (YNTIKFDTGVLRAFNLKYIIDYFRRNKKDGWISLS) are Extracellular-facing. Residues 311 to 331 (GILLCFTGTEALFSDLGYFSI) form a helical membrane-spanning segment. The Cytoplasmic portion of the chain corresponds to 332–335 (RSIQ). The helical transmembrane segment at 336-356 (LSFSFGLVPSVLLAYIGQAAY) threads the bilayer. Residues 357–375 (LREHPEHIANTFYRSTPNV) are Extracellular-facing. A helical transmembrane segment spans residues 376 to 396 (MFWPTFILAVAASIIGSQAMI). The Cytoplasmic segment spans residues 397 to 434 (SCAFATISHLQTLNCFPRVKILHTSRQYSGQLYIPEVN). Residues 435–455 (FLLCVGACLVTIGFKTTVIIG) traverse the membrane as a helical segment. Residues 456 to 459 (EAHA) lie on the Extracellular side of the membrane. Residues 460 to 480 (ICVVFVMIITTLLLTIVMLLV) form a helical membrane-spanning segment. Residues 481-482 (WK) are Cytoplasmic-facing. The helical transmembrane segment at 483 to 503 (VSIWYVALFFIVFMSSESIYL) threads the bilayer. Residues 504–515 (SAVLYQFVHGEY) lie on the Extracellular side of the membrane. The helical transmembrane segment at 516 to 536 (VPVAMSVFLMIVMTVWHYVHV) threads the bilayer. Residues 537 to 811 (KRYEFELEHT…VLKVGIAYEI (275 aa)) are Cytoplasmic-facing.

Belongs to the HAK/KUP transporter (TC 2.A.72.3) family.

Its subcellular location is the membrane. In terms of biological role, high-affinity potassium transporter. This Oryza sativa subsp. japonica (Rice) protein is Potassium transporter 27 (HAK27).